Here is a 213-residue protein sequence, read N- to C-terminus: mRNA-decapping protein OPG121 (213 aa).

N(7)-methyl-GTP is bound by residues glutamate 16 and arginine 50. The Nudix hydrolase domain maps to 30-209; the sequence is KDTHVFAACI…EYLSYIYNIL (180 aa). Positions 111–132 match the Nudix box motif; that stretch reads GKLDKKESIKDCLRRELKEESD. Glutamate 126 and glutamate 130 together coordinate Mg(2+). A N(7)-methyl-GTP-binding site is contributed by aspartate 151. Glutamate 183 contributes to the Mg(2+) binding site.

This sequence belongs to the Nudix hydrolase family. As to quaternary structure, interacts with the late transcription elongation factor VLTF-4/OPG110. Interacts with the late transcription factors VLTF-1. The cofactor is Mg(2+). Mn(2+) serves as cofactor.

It catalyses the reaction a 5'-end (N(7)-methyl 5'-triphosphoguanosine)-guanosine in mRNA + H2O = a 5'-end phospho-guanosine in mRNA + N(7)-methyl-GDP + 2 H(+). In terms of biological role, acts with RNA polymerase to initiate transcription from late gene promoters. This is mRNA-decapping protein OPG121 (OPG121) from Cynomys gunnisoni (Gunnison's prairie dog).